The primary structure comprises 91 residues: Small ribosomal subunit protein uS19 (91 aa).

Belongs to the universal ribosomal protein uS19 family.

Functionally, protein S19 forms a complex with S13 that binds strongly to the 16S ribosomal RNA. This is Small ribosomal subunit protein uS19 from Opitutus terrae (strain DSM 11246 / JCM 15787 / PB90-1).